Here is a 512-residue protein sequence, read N- to C-terminus: MESVIFSINGEIIQVNKEIITASPYNFFKRIQDHHLKDEAIILNGINYHAFESLLDYIRWKKINITINNVEMILVAAIIIDVPPVVDLCVKTMIHNINSTNCIRMFNFSKQYGIKKLYNASMSEIINNITAVTSDPEFGKLSKDELTTILSHEDVNVNHEDVTAMILLKWIHKNPNDVDIINILHPKFMTNTMRNAISLLGLTISKSTKPVTRNGIKHNIVVIKNSDYISTITHYSPRTEYWTIVGNTDRQFYNANVLHNCLYIIGGMINNRHVYSVSRVDLETKKWKTVTNMSSLKSEVSTCVNNGKLYVIGGLEFSISTGVAEYLKHGTSKWIRLPNLITPRYSGASVFVNDDIYVMGGVYTTYEKYVVLNDVECFTKNRWIKKSPMPRHHSIVYAVEYDGDIYVITGITHETRNYLYKYIVKEDKWIELYMYFNHVGKMFVCSCGDYILIIADAKYEYYPKSNTWNLFDMSTRNIEYYDMFTKDETPKCNVTHKSLPSFLSNCEKQFLQ.

A BTB domain is found at 2-67 (ESVIFSINGE…IRWKKINITI (66 aa)). Kelch repeat units follow at residues 216-261 (IKHN…LHNC), 262-307 (LYII…VNNG), 309-354 (LYVI…FVND), 356-403 (IYVM…EYDG), 405-449 (IYVI…SCGD), and 452-498 (LIIA…THKS).

Belongs to the poxviruses Kelch family.

The chain is Kelch repeat protein C2 from Homo sapiens (Human).